Here is a 494-residue protein sequence, read N- to C-terminus: Lysine--tRNA ligase (494 aa).

2 residues coordinate Mg(2+): E405 and E412.

It belongs to the class-II aminoacyl-tRNA synthetase family. In terms of assembly, homodimer. Requires Mg(2+) as cofactor.

It is found in the cytoplasm. It catalyses the reaction tRNA(Lys) + L-lysine + ATP = L-lysyl-tRNA(Lys) + AMP + diphosphate. The sequence is that of Lysine--tRNA ligase (lysS) from Geobacillus stearothermophilus (Bacillus stearothermophilus).